The chain runs to 148 residues: Probable glucosamine 6-phosphate N-acetyltransferase (148 aa).

One can recognise an N-acetyltransferase domain in the interval 3–148 (ISINELNFDD…KQMALYLNGK (146 aa)). Substrate contacts are provided by residues T25, 72–75 (KFIH), and 84–86 (EDV). Residues 86–88 (VVV) and 94–99 (LHGIGK) contribute to the acetyl-CoA site. Substrate is bound by residues 115–116 (YK) and D120. 129–131 (YCK) provides a ligand contact to acetyl-CoA. Position 138 (E138) interacts with substrate.

The protein belongs to the acetyltransferase family. GNA1 subfamily.

The catalysed reaction is D-glucosamine 6-phosphate + acetyl-CoA = N-acetyl-D-glucosamine 6-phosphate + CoA + H(+). It participates in nucleotide-sugar biosynthesis; UDP-N-acetyl-alpha-D-glucosamine biosynthesis; N-acetyl-alpha-D-glucosamine 1-phosphate from alpha-D-glucosamine 6-phosphate (route I): step 1/2. This chain is Probable glucosamine 6-phosphate N-acetyltransferase, found in Acanthamoeba polyphaga (Amoeba).